The chain runs to 276 residues: Large ribosomal subunit protein uL2 (276 aa).

A disordered region spans residues 219-276; it reads TVRGSAMNPNDHPHGGGEGRSPIGRPSPVTPWGKPALGYKTRKKNKHSDKFIVTGRKR.

This sequence belongs to the universal ribosomal protein uL2 family. As to quaternary structure, part of the 50S ribosomal subunit. Forms a bridge to the 30S subunit in the 70S ribosome.

Its function is as follows. One of the primary rRNA binding proteins. Required for association of the 30S and 50S subunits to form the 70S ribosome, for tRNA binding and peptide bond formation. It has been suggested to have peptidyltransferase activity; this is somewhat controversial. Makes several contacts with the 16S rRNA in the 70S ribosome. The chain is Large ribosomal subunit protein uL2 from Alkaliphilus metalliredigens (strain QYMF).